Here is a 475-residue protein sequence, read N- to C-terminus: Secreted triacylglycerol lipase LIP5 (475 aa).

The N-terminal stretch at 1–19 (MYPCTLLMVLLCLAIMTHG) is a signal peptide. The cysteines at positions 129 and 300 are disulfide-linked. S213 serves as the catalytic Nucleophile. N-linked (GlcNAc...) asparagine glycans are attached at residues N246 and N312. D360 is a catalytic residue. An N-linked (GlcNAc...) asparagine glycan is attached at N369. H394 is an active-site residue. N471 carries an N-linked (GlcNAc...) asparagine glycan.

The protein belongs to the AB hydrolase superfamily. Lipase family. Class Lip subfamily.

The enzyme catalyses a triacylglycerol + H2O = a diacylglycerol + a fatty acid + H(+). It catalyses the reaction a monoacylglycerol + H2O = glycerol + a fatty acid + H(+). The catalysed reaction is a diacylglycerol + H2O = a monoacylglycerol + a fatty acid + H(+). Functionally, secreted lipase involved in Dandruff and seborrheic dermatitis (D/SD) probably via lipase-mediated breakdown of sebaceous lipids and release of irritating free fatty acids. Has triacylglycerol lipase activity and is able to hydrolyze triolein. Mostly converts monoolein to di- and triolein, while free fatty acids are only produced in low amounts. The sequence is that of Secreted triacylglycerol lipase LIP5 from Malassezia globosa (strain ATCC MYA-4612 / CBS 7966) (Dandruff-associated fungus).